The sequence spans 538 residues: Probable cytochrome P450 309a2 (538 aa).

Cysteine 483 is a binding site for heme.

This sequence belongs to the cytochrome P450 family. Heme is required as a cofactor.

The protein localises to the endoplasmic reticulum membrane. It localises to the microsome membrane. May be involved in the metabolism of insect hormones and in the breakdown of synthetic insecticides. The chain is Probable cytochrome P450 309a2 (Cyp309a2) from Drosophila melanogaster (Fruit fly).